We begin with the raw amino-acid sequence, 38 residues long: GFGCPLDQMQCHRHCQTITGRSGGYCSGPLKLTCTCYR.

3 disulfide bridges follow: cysteine 4–cysteine 26, cysteine 11–cysteine 34, and cysteine 15–cysteine 36.

This sequence belongs to the invertebrate defensin family. Type 2 subfamily.

It is found in the secreted. Mediates the inducible antibacterial activity in larvae of A.cyanea. This chain is Defensin, found in Aeshna cyanea (Southern hawker dragonfly).